The sequence spans 113 residues: T cell receptor alpha variable 13-2 (113 aa).

A signal peptide spans 1–21; that stretch reads MAGIRALFMYLWLQLDWVSRG. An Ig-like domain is found at 22 to 113; that stretch reads ESVGLHLPTL…DSAVYFCAEN (92 aa). Cysteine 43 and cysteine 110 are disulfide-bonded. N-linked (GlcNAc...) asparagine glycosylation is present at asparagine 87.

As to quaternary structure, alpha-beta TR is a heterodimer composed of an alpha and beta chain; disulfide-linked. The alpha-beta TR is associated with the transmembrane signaling CD3 coreceptor proteins to form the TR-CD3 (TcR or TCR). The assembly of alpha-beta TR heterodimers with CD3 occurs in the endoplasmic reticulum where a single alpha-beta TR heterodimer associates with one CD3D-CD3E heterodimer, one CD3G-CD3E heterodimer and one CD247 homodimer forming a stable octameric structure. CD3D-CD3E and CD3G-CD3E heterodimers preferentially associate with TR alpha and TR beta chains, respectively. The association of the CD247 homodimer is the last step of TcR assembly in the endoplasmic reticulum and is required for transport to the cell surface.

It is found in the cell membrane. Its function is as follows. V region of the variable domain of T cell receptor (TR) alpha chain that participates in the antigen recognition. Alpha-beta T cell receptors are antigen specific receptors which are essential to the immune response and are present on the cell surface of T lymphocytes. Recognize peptide-major histocompatibility (MH) (pMH) complexes that are displayed by antigen presenting cells (APC), a prerequisite for efficient T cell adaptive immunity against pathogens. Binding of alpha-beta TR to pMH complex initiates TR-CD3 clustering on the cell surface and intracellular activation of LCK that phosphorylates the ITAM motifs of CD3G, CD3D, CD3E and CD247 enabling the recruitment of ZAP70. In turn ZAP70 phosphorylates LAT, which recruits numerous signaling molecules to form the LAT signalosome. The LAT signalosome propagates signal branching to three major signaling pathways, the calcium, the mitogen-activated protein kinase (MAPK) kinase and the nuclear factor NF-kappa-B (NF-kB) pathways, leading to the mobilization of transcription factors that are critical for gene expression and essential for T cell growth and differentiation. The T cell repertoire is generated in the thymus, by V-(D)-J rearrangement. This repertoire is then shaped by intrathymic selection events to generate a peripheral T cell pool of self-MH restricted, non-autoaggressive T cells. Post-thymic interaction of alpha-beta TR with the pMH complexes shapes TR structural and functional avidity. This is T cell receptor alpha variable 13-2 from Homo sapiens (Human).